Consider the following 223-residue polypeptide: Deoxyribose-phosphate aldolase (223 aa).

D91 serves as the catalytic Proton donor/acceptor. The active-site Schiff-base intermediate with acetaldehyde is the K153. Catalysis depends on K182, which acts as the Proton donor/acceptor.

It belongs to the DeoC/FbaB aldolase family. DeoC type 1 subfamily.

It is found in the cytoplasm. It carries out the reaction 2-deoxy-D-ribose 5-phosphate = D-glyceraldehyde 3-phosphate + acetaldehyde. It participates in carbohydrate degradation; 2-deoxy-D-ribose 1-phosphate degradation; D-glyceraldehyde 3-phosphate and acetaldehyde from 2-deoxy-alpha-D-ribose 1-phosphate: step 2/2. Its function is as follows. Catalyzes a reversible aldol reaction between acetaldehyde and D-glyceraldehyde 3-phosphate to generate 2-deoxy-D-ribose 5-phosphate. The protein is Deoxyribose-phosphate aldolase of Streptococcus pyogenes serotype M3 (strain ATCC BAA-595 / MGAS315).